The sequence spans 192 residues: Ion-translocating oxidoreductase complex subunit A (192 aa).

6 helical membrane passes run 5–25, 39–59, 65–85, 102–122, 134–154, and 171–191; these read LLLLVGTVLVNNFVLVKFLGL, IGMSMATTFVLTLASILSYLV, LPFDLGYLRTMSFILVIAVVV, ALGIYLPLITTNCAVLGVALL, AIFGFGAAVGFSLVLILFSAM, and AIAMVTAGLMSLAFMGFTGLV.

This sequence belongs to the NqrDE/RnfAE family. As to quaternary structure, the complex is composed of six subunits: RnfA, RnfB, RnfC, RnfD, RnfE and RnfG.

The protein localises to the cell inner membrane. In terms of biological role, part of a membrane-bound complex that couples electron transfer with translocation of ions across the membrane. In Shewanella piezotolerans (strain WP3 / JCM 13877), this protein is Ion-translocating oxidoreductase complex subunit A.